A 430-amino-acid polypeptide reads, in one-letter code: MAQKVNPISVRLNLNRSSDSSWFSDYYYGKLLYQDLNFRDYFGSIRPPTGNTFGFRLGRCIIHHFPKRTFIHVFFLDRLSQSRHQGLGAIPSVKLIRRINDNTVKQRNEVGIWPKKRYEYHDRLPSIQKIDQLLRVSDWMADIHSTFQSIWPKDENDDRRASEERYAFSRFAPSILVAVRAEKKKAIFGSEGDFFGFTGRAFLDYFVMQYFFNLKNQIQFDPMVNRSPVAQGVAKTSMIGKAIPAKTEQGTQSGESICQPRSTLYFDAIIFLRYARFRKATSLSSRYYYLKKMQSLFSNQTKTNTLIQPVKIASVYQSASLIAQEISWKLEQKKSFRQICRSIFKQIKKCPYVKGIRIGCSGRLNGAEIAKTECKKYGETSLHVFSDQIDYAKTQASTPYGILGVKVWVSYFLTQKKGTSCAISKTYKIS.

It belongs to the universal ribosomal protein uS3 family.

The protein resides in the mitochondrion. This chain is Small ribosomal subunit protein uS3m (RPS3), found in Marchantia polymorpha (Common liverwort).